Consider the following 404-residue polypeptide: AT-hook motif nuclear-localized protein 3 (404 aa).

Disordered regions lie at residues 1 to 51 (MEER…VPPT), 70 to 100 (PFSL…PDGT), and 113 to 133 (SVPL…GKSN). Over residues 7–19 (TNINNNITSSFGL) the composition is skewed to polar residues. Residues 35–51 (DPPPRPENPNPFLVPPT) are compositionally biased toward pro residues. Residues 71-83 (FSLTMPTENTSAE) are compositionally biased toward polar residues. The short motif at 86–94 (KKKRGRPRK) is the Bipartite nuclear localization signal element. A DNA-binding region (a.T hook) is located at residues 86–98 (KKKRGRPRKYNPD). Over residues 123-133 (RKRGRGRGKSN) the composition is skewed to basic residues. In terms of domain architecture, PPC spans 163–308 (GANFTPHVLI…RFGAQPSSIS (146 aa)). A disordered region spans residues 359 to 404 (PFSSIPVGGGGGGEVGEEEGEEDDDELEGEDEEFGGDSQSDNEIPS). Over residues 373–393 (VGEEEGEEDDDELEGEDEEFG) the composition is skewed to acidic residues.

In terms of assembly, homodimer. Interacts with AHL4. As to expression, expressed in both procambium and xylem precursors of the root meristem. Also detected in the endodermis in the late elongation zone and onwards.

It is found in the nucleus. Functionally, transcription factor that specifically binds AT-rich DNA sequences related to the nuclear matrix attachment regions (MARs). Acts redundantly with AHL4 to regulate the formation of tissue boundary between the xylem and procambium in the root meristem. The protein is AT-hook motif nuclear-localized protein 3 of Arabidopsis thaliana (Mouse-ear cress).